Consider the following 511-residue polypeptide: Ribose import ATP-binding protein RbsA (511 aa).

ABC transporter domains lie at 9–245 (FEAK…VGRD) and 261–506 (LRAE…LPRR). Residue 41–48 (GENGAGKS) coordinates ATP.

This sequence belongs to the ABC transporter superfamily. Ribose importer (TC 3.A.1.2.1) family. The complex is composed of an ATP-binding protein (RbsA), two transmembrane proteins (RbsC) and a solute-binding protein (RbsB).

The protein resides in the cell inner membrane. It carries out the reaction D-ribose(out) + ATP + H2O = D-ribose(in) + ADP + phosphate + H(+). Functionally, part of the ABC transporter complex RbsABC involved in ribose import. Responsible for energy coupling to the transport system. In Rhodopirellula baltica (strain DSM 10527 / NCIMB 13988 / SH1), this protein is Ribose import ATP-binding protein RbsA.